The primary structure comprises 378 residues: Alkaline elastase YaB (378 aa).

A signal peptide spans 1 to 27; it reads MNKKMGKIVAGTALIISVAFSSSIAQA. Positions 28-110 are excised as a propeptide; it reads AEEAKEKYLI…IEEDAEVTTM (83 aa). Residue Q111 participates in Ca(2+) binding. Positions 114-377 constitute a Peptidase S8 domain; sequence PWGINRVQAP…SGLVNAEAAT (264 aa). D141 acts as the Charge relay system in catalysis. D149 provides a ligand contact to Ca(2+). Catalysis depends on H171, which acts as the Charge relay system. 7 residues coordinate Ca(2+): L182, N184, I186, V188, A272, Y274, and A277. Residue S324 is the Charge relay system of the active site.

This sequence belongs to the peptidase S8 family. Requires Ca(2+) as cofactor.

It is found in the secreted. In terms of biological role, digests elastin efficiently, has a substrate preference for Ala in P1 position. The chain is Alkaline elastase YaB (ale) from Bacillus sp. (strain YaB).